We begin with the raw amino-acid sequence, 775 residues long: N6-adenosine-methyltransferase non-catalytic subunit MTB (775 aa).

Basic and acidic residues predominate over residues 1 to 10; that stretch reads MKKKQEESSL. 2 disordered regions span residues 1–424 and 520–569; these read MKKK…GAIP and DRGG…EQND. Positions 40 to 49 are enriched in low complexity; that stretch reads FESSSRSGGS. Basic and acidic residues-rich tracts occupy residues 50–79, 100–117, 125–222, 229–278, and 333–344; these read KSKEDNKSVVDVEHQDRDSKRERDGRERTH, DGDHKSSKLSDSRHDSGG, EHGE…LKDN, SSGD…RGEA, and EWAHNQEGRQRS. Over residues 375-400 the composition is skewed to polar residues; that stretch reads QRGSTPGRTNFVQTPNRGYQTPQGTR.

The protein belongs to the MT-A70-like family. As to quaternary structure, forms homodimers. Interacts with HAKAI, MTA and VIR. Associates with MTA, FIP37, VIR and HAKAI to form the m6A writer complex which is essential for adenosine methylation at specific mRNA sequences.

It localises to the nucleus speckle. Its subcellular location is the nucleus. The protein localises to the nucleoplasm. Functionally, probable non-catalytic subunit of the N6-methyltransferase complex, a multiprotein complex that mediates N6-methyladenosine (m6A) methylation at the 5'-[AG]GAC-3' consensus sites of some mRNAs. Associates with MTA, FIP37, VIR and HAKAI to form the m6A writer complex which is essential for adenosine methylation at specific mRNA sequences. N6-methyladenosine (m6A) plays a role in mRNA stability, processing, translation efficiency and editing. In Arabidopsis thaliana (Mouse-ear cress), this protein is N6-adenosine-methyltransferase non-catalytic subunit MTB.